The chain runs to 188 residues: UPF0461 protein C5orf24 (188 aa).

Over residues 1-10 (MMHPVASSNP) the composition is skewed to polar residues. Residues 1-20 (MMHPVASSNPAFCGPGKPSC) form a disordered region. Ser37 is modified (phosphoserine). Lys75 participates in a covalent cross-link: Glycyl lysine isopeptide (Lys-Gly) (interchain with G-Cter in SUMO2). The segment at 79–142 (KKKKNLNRSG…GYKVSPGRPP (64 aa)) is disordered. A compositionally biased stretch (basic residues) spans 80–92 (KKKNLNRSGKRGR). Positions 94–107 (SGTTKSAGYRTSTG) are enriched in polar residues. Ser121 and Ser180 each carry phosphoserine. A Glycyl lysine isopeptide (Lys-Gly) (interchain with G-Cter in SUMO2) cross-link involves residue Lys184.

Belongs to the UPF0461 family.

The sequence is that of UPF0461 protein C5orf24 (C5orf24) from Homo sapiens (Human).